The chain runs to 380 residues: uncharacterized protein (380 aa).

Residues 1-28 (MQFLSDTQRMVLSRAVCASFFFFHVAVA) form the signal peptide. In terms of domain architecture, SPOR spans 307–380 (AGDEKPRGYQ…DAGYETFPLF (74 aa)).

This is an uncharacterized protein from Treponema pallidum (strain Nichols).